The sequence spans 261 residues: MAHQAHAYHMVDPSPWPLTGAVAALLMTSGLAVWFHFHSMYLLYLGLTLLLLTMVQWWRDIIREGTFQGHHTPPVQKGLRYGMILFITSEVFFFLGFFWAFYHSSLAPTPELGGCWPPTGIYPLDPFEVPLLNTAVLLASGVTVTWAHHSLMEGNRKEAIQALTLTVLLGFYFTALQAMEYYEAPFTIADGVYGSTFFVATGFHGLHVIIGSTFLMVCLLRQIQYHFTSEHHFGFERAAWYWHFVDVVWLFLYVSIYWWGS.

The Mitochondrial matrix portion of the chain corresponds to 1 to 15 (MAHQAHAYHMVDPSP). The chain crosses the membrane as a helical span at residues 16–34 (WPLTGAVAALLMTSGLAVW). Residues 35 to 40 (FHFHSM) lie on the Mitochondrial intermembrane side of the membrane. The helical transmembrane segment at 41–66 (YLLYLGLTLLLLTMVQWWRDIIREGT) threads the bilayer. The Mitochondrial matrix portion of the chain corresponds to 67–72 (FQGHHT). Residues 73–105 (PPVQKGLRYGMILFITSEVFFFLGFFWAFYHSS) traverse the membrane as a helical segment. Residues 106–128 (LAPTPELGGCWPPTGIYPLDPFE) lie on the Mitochondrial intermembrane side of the membrane. Residues 129 to 152 (VPLLNTAVLLASGVTVTWAHHSLM) traverse the membrane as a helical segment. Topologically, residues 153 to 155 (EGN) are mitochondrial matrix. Residues 156-183 (RKEAIQALTLTVLLGFYFTALQAMEYYE) traverse the membrane as a helical segment. At 184–190 (APFTIAD) the chain is on the mitochondrial intermembrane side. The chain crosses the membrane as a helical span at residues 191–223 (GVYGSTFFVATGFHGLHVIIGSTFLMVCLLRQI). Over 224–232 (QYHFTSEHH) the chain is Mitochondrial matrix. The helical transmembrane segment at 233 to 256 (FGFERAAWYWHFVDVVWLFLYVSI) threads the bilayer. The Mitochondrial intermembrane segment spans residues 257–261 (YWWGS).

The protein belongs to the cytochrome c oxidase subunit 3 family. In terms of assembly, component of the cytochrome c oxidase (complex IV, CIV), a multisubunit enzyme composed of 14 subunits. The complex is composed of a catalytic core of 3 subunits MT-CO1, MT-CO2 and MT-CO3, encoded in the mitochondrial DNA, and 11 supernumerary subunits COX4I, COX5A, COX5B, COX6A, COX6B, COX6C, COX7A, COX7B, COX7C, COX8 and NDUFA4, which are encoded in the nuclear genome. The complex exists as a monomer or a dimer and forms supercomplexes (SCs) in the inner mitochondrial membrane with NADH-ubiquinone oxidoreductase (complex I, CI) and ubiquinol-cytochrome c oxidoreductase (cytochrome b-c1 complex, complex III, CIII), resulting in different assemblies (supercomplex SCI(1)III(2)IV(1) and megacomplex MCI(2)III(2)IV(2)).

The protein resides in the mitochondrion inner membrane. It catalyses the reaction 4 Fe(II)-[cytochrome c] + O2 + 8 H(+)(in) = 4 Fe(III)-[cytochrome c] + 2 H2O + 4 H(+)(out). Its function is as follows. Component of the cytochrome c oxidase, the last enzyme in the mitochondrial electron transport chain which drives oxidative phosphorylation. The respiratory chain contains 3 multisubunit complexes succinate dehydrogenase (complex II, CII), ubiquinol-cytochrome c oxidoreductase (cytochrome b-c1 complex, complex III, CIII) and cytochrome c oxidase (complex IV, CIV), that cooperate to transfer electrons derived from NADH and succinate to molecular oxygen, creating an electrochemical gradient over the inner membrane that drives transmembrane transport and the ATP synthase. Cytochrome c oxidase is the component of the respiratory chain that catalyzes the reduction of oxygen to water. Electrons originating from reduced cytochrome c in the intermembrane space (IMS) are transferred via the dinuclear copper A center (CU(A)) of subunit 2 and heme A of subunit 1 to the active site in subunit 1, a binuclear center (BNC) formed by heme A3 and copper B (CU(B)). The BNC reduces molecular oxygen to 2 water molecules using 4 electrons from cytochrome c in the IMS and 4 protons from the mitochondrial matrix. The chain is Cytochrome c oxidase subunit 3 (MT-CO3) from Squalus acanthias (Spiny dogfish).